The chain runs to 497 residues: IWS1-like protein (497 aa).

The interval 1–191 (MSDHEGASPA…SDRRGGRNFE (191 aa)) is disordered. Low complexity-rich tracts occupy residues 7-23 (ASPA…PVSP) and 47-57 (PLAPRSPASPR). Composition is skewed to basic and acidic residues over residues 123 to 134 (EGDKQQKRKDLF), 144 to 160 (DRPK…VKGD), and 181 to 191 (PSDRRGGRNFE). In terms of domain architecture, TFIIS N-terminal spans 281–361 (SALSEWLAPL…GEWARPIYHL (81 aa)). Residues 369–433 (SRQEREERDY…GDKGYINRAR (65 aa)) are disordered. Composition is skewed to basic and acidic residues over residues 370–382 (RQER…SRMP) and 401–411 (APKRPRIRDAE).

The protein belongs to the IWS1 family.

The protein resides in the nucleus. In Caenorhabditis briggsae, this protein is IWS1-like protein.